We begin with the raw amino-acid sequence, 155 residues long: uncharacterized protein (155 aa).

The first 24 residues, 1–24 (MQQLSKRRLSALFVTAFLPVTAFA), serve as a signal peptide directing secretion.

This is an uncharacterized protein from Chromohalobacter salexigens (strain ATCC BAA-138 / DSM 3043 / CIP 106854 / NCIMB 13768 / 1H11).